The following is a 227-amino-acid chain: Large ribosomal subunit protein bL25 (227 aa).

It belongs to the bacterial ribosomal protein bL25 family. CTC subfamily. As to quaternary structure, part of the 50S ribosomal subunit; part of the 5S rRNA/L5/L18/L25 subcomplex. Contacts the 5S rRNA. Binds to the 5S rRNA independently of L5 and L18.

This is one of the proteins that binds to the 5S RNA in the ribosome where it forms part of the central protuberance. The polypeptide is Large ribosomal subunit protein bL25 (Polaromonas sp. (strain JS666 / ATCC BAA-500)).